We begin with the raw amino-acid sequence, 379 residues long: MARRRAFPAFALRLWSILPCLLLLRADAGQPPEESLYLWIDAHQARVLIGFEEDILIVSEGKMAPFTHDFRKAQQRMPAIPVNIHSMNFTWQAAGQAEYFYEFLSLRSLDKGIMADPTVNVPLLGTVPHKASVVQVGFPCLGKQDGVAAFEVNVIVMNSEGNTILRTPQNAIFFKTCQQAECPGGCRNGGFCNERRVCECPDGFYGPHCEKALCIPRCMNGGLCVTPGFCICPPGFYGVNCDKANCSTTCFNGGTCFYPGKCICPPGLEGEQCELSKCPQPCRNGGKCIGKSKCKCPKGYQGDLCSKPVCEPGCGAHGTCHEPNKCQCREGWHGRHCNKRYGASLMHAPRPAGAGLERHTPSLKKAEDRRDPPESNYIW.

A signal peptide spans 1–28; sequence MARRRAFPAFALRLWSILPCLLLLRADA. Positions 38-177 constitute a WIF domain; the sequence is LWIDAHQARV…PQNAIFFKTC (140 aa). Residue asparagine 88 is glycosylated (N-linked (GlcNAc...) asparagine). Disulfide bonds link cysteine 140–cysteine 177, cysteine 182–cysteine 192, cysteine 186–cysteine 198, cysteine 200–cysteine 209, cysteine 214–cysteine 224, cysteine 218–cysteine 230, and cysteine 232–cysteine 241. 5 EGF-like domains span residues 178–210, 211–242, 243–271, 274–306, and 307–338; these read QQAE…PHCE, KALC…VNCD, KANC…LEGE, ELSK…DLCS, and KPVC…RHCN. Asparagine 245 carries N-linked (GlcNAc...) asparagine glycosylation. Intrachain disulfides connect cysteine 246/cysteine 256, cysteine 250/cysteine 262, cysteine 278/cysteine 288, cysteine 282/cysteine 294, cysteine 296/cysteine 305, cysteine 310/cysteine 320, cysteine 314/cysteine 326, and cysteine 328/cysteine 337. Positions 348–379 are disordered; that stretch reads APRPAGAGLERHTPSLKKAEDRRDPPESNYIW. Basic and acidic residues predominate over residues 356 to 373; it reads LERHTPSLKKAEDRRDPP.

As to quaternary structure, interacts with MYOC. As to expression, expression highest in heart and lung. Lower in brain and eye.

It is found in the secreted. Binds to WNT proteins and inhibits their activities. May be involved in mesoderm segmentation. The protein is Wnt inhibitory factor 1 (Wif1) of Mus musculus (Mouse).